Reading from the N-terminus, the 243-residue chain is Probable 6-phosphogluconolactonase (243 aa).

The protein belongs to the glucosamine/galactosamine-6-phosphate isomerase family. 6-phosphogluconolactonase subfamily.

It carries out the reaction 6-phospho-D-glucono-1,5-lactone + H2O = 6-phospho-D-gluconate + H(+). It participates in carbohydrate degradation; pentose phosphate pathway; D-ribulose 5-phosphate from D-glucose 6-phosphate (oxidative stage): step 2/3. Its function is as follows. Hydrolysis of 6-phosphogluconolactone to 6-phosphogluconate. This chain is Probable 6-phosphogluconolactonase, found in Drosophila melanogaster (Fruit fly).